A 144-amino-acid polypeptide reads, in one-letter code: Large ribosomal subunit protein uL15 (144 aa).

The interval 1-52 (MRLNTLSPAEGAKHAPKRVGRGIGSGLGKTAGRGHKGQNSRSGGGVRRGFEG) is disordered. Over residues 21 to 31 (RGIGSGLGKTA) the composition is skewed to gly residues.

This sequence belongs to the universal ribosomal protein uL15 family. In terms of assembly, part of the 50S ribosomal subunit.

In terms of biological role, binds to the 23S rRNA. This Yersinia enterocolitica serotype O:8 / biotype 1B (strain NCTC 13174 / 8081) protein is Large ribosomal subunit protein uL15.